We begin with the raw amino-acid sequence, 451 residues long: SH2 domain-containing protein 7 (451 aa).

The region spanning 51–142 (WFHGFITRKQ…PFKEMLTAAC (92 aa)) is the SH2 domain. Disordered stretches follow at residues 180–232 (KAAS…SLLE), 256–321 (LGTE…SDAM), and 408–436 (GTPE…THKP). The span at 221-232 (SPLPEKSSSLLE) shows a compositional bias: low complexity. The span at 279-291 (EAQRRLSDGEQNR) shows a compositional bias: basic and acidic residues. The span at 306-316 (QGPTESPTSWG) shows a compositional bias: polar residues. The segment covering 426-436 (KSKETGRTHKP) has biased composition (basic and acidic residues).

The protein is SH2 domain-containing protein 7 (SH2D7) of Homo sapiens (Human).